The chain runs to 346 residues: Methylthioribose-1-phosphate isomerase (346 aa).

Residues 50 to 52 (RGA), R93, and Q196 each bind substrate. The active-site Proton donor is D237. 247–248 (NK) contacts substrate.

Belongs to the eIF-2B alpha/beta/delta subunits family. MtnA subfamily.

The catalysed reaction is 5-(methylsulfanyl)-alpha-D-ribose 1-phosphate = 5-(methylsulfanyl)-D-ribulose 1-phosphate. The protein operates within amino-acid biosynthesis; L-methionine biosynthesis via salvage pathway; L-methionine from S-methyl-5-thio-alpha-D-ribose 1-phosphate: step 1/6. In terms of biological role, catalyzes the interconversion of methylthioribose-1-phosphate (MTR-1-P) into methylthioribulose-1-phosphate (MTRu-1-P). This Alkalilimnicola ehrlichii (strain ATCC BAA-1101 / DSM 17681 / MLHE-1) protein is Methylthioribose-1-phosphate isomerase.